The sequence spans 248 residues: 2,3-bisphosphoglycerate-dependent phosphoglycerate mutase (248 aa).

Substrate is bound by residues Arg-8–Asn-15, Thr-21–Gly-22, Arg-60, Glu-87–Tyr-90, Lys-98, Arg-114–Arg-115, and Gly-183–Asn-184. His-9 serves as the catalytic Tele-phosphohistidine intermediate. The active-site Proton donor/acceptor is Glu-87.

This sequence belongs to the phosphoglycerate mutase family. BPG-dependent PGAM subfamily.

The enzyme catalyses (2R)-2-phosphoglycerate = (2R)-3-phosphoglycerate. It participates in carbohydrate degradation; glycolysis; pyruvate from D-glyceraldehyde 3-phosphate: step 3/5. Functionally, catalyzes the interconversion of 2-phosphoglycerate and 3-phosphoglycerate. This Brachyspira hyodysenteriae (strain ATCC 49526 / WA1) protein is 2,3-bisphosphoglycerate-dependent phosphoglycerate mutase.